The following is a 156-amino-acid chain: Small ribosomal subunit protein uS7 (156 aa).

The protein belongs to the universal ribosomal protein uS7 family. In terms of assembly, part of the 30S ribosomal subunit. Contacts proteins S9 and S11.

In terms of biological role, one of the primary rRNA binding proteins, it binds directly to 16S rRNA where it nucleates assembly of the head domain of the 30S subunit. Is located at the subunit interface close to the decoding center, probably blocks exit of the E-site tRNA. This is Small ribosomal subunit protein uS7 from Ligilactobacillus salivarius (strain UCC118) (Lactobacillus salivarius).